We begin with the raw amino-acid sequence, 596 residues long: UvrABC system protein C (596 aa).

The 78-residue stretch at 14–91 (QQPGCYLMKD…IKKYDPRYNV (78 aa)) folds into the GIY-YIG domain. The 36-residue stretch at 196–231 (KDIRKNLAGEMQKASEALNFERAKEIRDTIQHIDAT) folds into the UVR domain.

Belongs to the UvrC family. As to quaternary structure, interacts with UvrB in an incision complex.

The protein resides in the cytoplasm. Its function is as follows. The UvrABC repair system catalyzes the recognition and processing of DNA lesions. UvrC both incises the 5' and 3' sides of the lesion. The N-terminal half is responsible for the 3' incision and the C-terminal half is responsible for the 5' incision. The sequence is that of UvrABC system protein C from Oceanobacillus iheyensis (strain DSM 14371 / CIP 107618 / JCM 11309 / KCTC 3954 / HTE831).